Reading from the N-terminus, the 278-residue chain is HTH-type transcriptional regulator HdfR (278 aa).

Positions 1–58 constitute an HTH lysR-type domain; sequence MDTELLKTFLEVSRTRHFGRAAEALYLTQSAVSFRIRQLENQLGVNLFTRHRNNIRLT. Positions 18-37 form a DNA-binding region, H-T-H motif; that stretch reads FGRAAEALYLTQSAVSFRIR.

It belongs to the LysR transcriptional regulatory family.

Its function is as follows. Negatively regulates the transcription of the flagellar master operon flhDC by binding to the upstream region of the operon. This Salmonella schwarzengrund (strain CVM19633) protein is HTH-type transcriptional regulator HdfR.